Reading from the N-terminus, the 338-residue chain is 3-isopropylmalate dehydrogenase (338 aa).

The substrate site is built by Arg88, Arg98, Arg122, and Asp212. Mg(2+)-binding residues include Asp212, Asp236, and Asp240. 272–284 (GSAPDIAGQGIAD) serves as a coordination point for NAD(+).

Belongs to the isocitrate and isopropylmalate dehydrogenases family. LeuB type 2 subfamily. As to quaternary structure, homodimer. Mg(2+) serves as cofactor. Requires Mn(2+) as cofactor.

The protein resides in the cytoplasm. It catalyses the reaction (2R,3S)-3-isopropylmalate + NAD(+) = 4-methyl-2-oxopentanoate + CO2 + NADH. It participates in amino-acid biosynthesis; L-leucine biosynthesis; L-leucine from 3-methyl-2-oxobutanoate: step 3/4. Functionally, catalyzes the oxidation of 3-carboxy-2-hydroxy-4-methylpentanoate (3-isopropylmalate) to 3-carboxy-4-methyl-2-oxopentanoate. The product decarboxylates to 4-methyl-2 oxopentanoate. This chain is 3-isopropylmalate dehydrogenase, found in Corynebacterium jeikeium (strain K411).